The chain runs to 402 residues: Sulfate adenylyltransferase (402 aa).

It belongs to the sulfate adenylyltransferase family.

It catalyses the reaction sulfate + ATP + H(+) = adenosine 5'-phosphosulfate + diphosphate. It participates in sulfur metabolism; hydrogen sulfide biosynthesis; sulfite from sulfate: step 1/3. This is Sulfate adenylyltransferase from Ruthia magnifica subsp. Calyptogena magnifica.